Reading from the N-terminus, the 283-residue chain is Glutamyl-Q tRNA(Asp) synthetase (283 aa).

Residues 5-9 (RFAPT) and Glu41 each bind L-glutamate. Positions 8–18 (PTPSGPLHLGS) match the 'HIGH' region motif. Residues Cys97, Cys99, Tyr111, and Cys115 each contribute to the Zn(2+) site. 2 residues coordinate L-glutamate: Tyr168 and Arg186. A 'KMSKS' region motif is present at residues 224 to 228 (KLSKQ). Lys227 is a binding site for ATP.

This sequence belongs to the class-I aminoacyl-tRNA synthetase family. GluQ subfamily. Requires Zn(2+) as cofactor.

Catalyzes the tRNA-independent activation of glutamate in presence of ATP and the subsequent transfer of glutamate onto a tRNA(Asp). Glutamate is transferred on the 2-amino-5-(4,5-dihydroxy-2-cyclopenten-1-yl) moiety of the queuosine in the wobble position of the QUC anticodon. In Idiomarina loihiensis (strain ATCC BAA-735 / DSM 15497 / L2-TR), this protein is Glutamyl-Q tRNA(Asp) synthetase.